Consider the following 464-residue polypeptide: Phosphoenolpyruvate carboxylase (464 aa).

Belongs to the PEPCase type 2 family. In terms of assembly, homotetramer. Mg(2+) serves as cofactor.

The enzyme catalyses oxaloacetate + phosphate = phosphoenolpyruvate + hydrogencarbonate. Catalyzes the irreversible beta-carboxylation of phosphoenolpyruvate (PEP) to form oxaloacetate (OAA), a four-carbon dicarboxylic acid source for the tricarboxylic acid cycle. This is Phosphoenolpyruvate carboxylase from Thermofilum pendens (strain DSM 2475 / Hrk 5).